We begin with the raw amino-acid sequence, 364 residues long: tRNA 2-selenouridine synthase (364 aa).

The 124-residue stretch at 14–137 (LIADTPIIDV…LRQTAIQATI (124 aa)) folds into the Rhodanese domain. Cys97 (S-selanylcysteine intermediate) is an active-site residue.

It belongs to the SelU family. In terms of assembly, monomer.

The enzyme catalyses 5-methylaminomethyl-2-thiouridine(34) in tRNA + selenophosphate + (2E)-geranyl diphosphate + H2O + H(+) = 5-methylaminomethyl-2-selenouridine(34) in tRNA + (2E)-thiogeraniol + phosphate + diphosphate. The catalysed reaction is 5-methylaminomethyl-2-thiouridine(34) in tRNA + (2E)-geranyl diphosphate = 5-methylaminomethyl-S-(2E)-geranyl-thiouridine(34) in tRNA + diphosphate. It carries out the reaction 5-methylaminomethyl-S-(2E)-geranyl-thiouridine(34) in tRNA + selenophosphate + H(+) = 5-methylaminomethyl-2-(Se-phospho)selenouridine(34) in tRNA + (2E)-thiogeraniol. It catalyses the reaction 5-methylaminomethyl-2-(Se-phospho)selenouridine(34) in tRNA + H2O = 5-methylaminomethyl-2-selenouridine(34) in tRNA + phosphate. Functionally, involved in the post-transcriptional modification of the uridine at the wobble position (U34) of tRNA(Lys), tRNA(Glu) and tRNA(Gln). Catalyzes the conversion of 2-thiouridine (S2U-RNA) to 2-selenouridine (Se2U-RNA). Acts in a two-step process involving geranylation of 2-thiouridine (S2U) to S-geranyl-2-thiouridine (geS2U) and subsequent selenation of the latter derivative to 2-selenouridine (Se2U) in the tRNA chain. The polypeptide is tRNA 2-selenouridine synthase (Escherichia coli O127:H6 (strain E2348/69 / EPEC)).